Here is a 542-residue protein sequence, read N- to C-terminus: CTP synthase (542 aa).

The interval 1 to 265 (MTKFVFVTGG…DEIVCHKLNL (265 aa)) is amidoligase domain. Residue Ser-13 participates in CTP binding. A UTP-binding site is contributed by Ser-13. ATP contacts are provided by residues 14–19 (SLGKGI) and Asp-71. Mg(2+)-binding residues include Asp-71 and Glu-139. CTP-binding positions include 146–148 (DIE), 186–191 (KTKPTQ), and Lys-222. UTP-binding positions include 186–191 (KTKPTQ) and Lys-222. Positions 290-542 (NVAFVGKYVD…IAAALANRKA (253 aa)) constitute a Glutamine amidotransferase type-1 domain. Position 351 (Gly-351) interacts with L-glutamine. The Nucleophile; for glutamine hydrolysis role is filled by Cys-378. Residues 379 to 382 (LGMQ), Glu-402, and Arg-468 contribute to the L-glutamine site. Residues His-515 and Glu-517 contribute to the active site.

This sequence belongs to the CTP synthase family. As to quaternary structure, homotetramer.

The enzyme catalyses UTP + L-glutamine + ATP + H2O = CTP + L-glutamate + ADP + phosphate + 2 H(+). The catalysed reaction is L-glutamine + H2O = L-glutamate + NH4(+). It catalyses the reaction UTP + NH4(+) + ATP = CTP + ADP + phosphate + 2 H(+). The protein operates within pyrimidine metabolism; CTP biosynthesis via de novo pathway; CTP from UDP: step 2/2. Allosterically activated by GTP, when glutamine is the substrate; GTP has no effect on the reaction when ammonia is the substrate. The allosteric effector GTP functions by stabilizing the protein conformation that binds the tetrahedral intermediate(s) formed during glutamine hydrolysis. Inhibited by the product CTP, via allosteric rather than competitive inhibition. Functionally, catalyzes the ATP-dependent amination of UTP to CTP with either L-glutamine or ammonia as the source of nitrogen. Regulates intracellular CTP levels through interactions with the four ribonucleotide triphosphates. This Methylobacillus flagellatus (strain ATCC 51484 / DSM 6875 / VKM B-1610 / KT) protein is CTP synthase.